Here is a 250-residue protein sequence, read N- to C-terminus: NAD-dependent protein deacylase 1 (250 aa).

The region spanning 1–250 is the Deacetylase sirtuin-type domain; that stretch reads MRAVVELLAG…PELLRRAFPG (250 aa). Position 19 to 39 (19 to 39) interacts with NAD(+); that stretch reads GAGVSAESGIPTFRDALGGLW. Substrate contacts are provided by Tyr-64 and Arg-67. 98–101 contributes to the NAD(+) binding site; that stretch reads QNVD. His-116 acts as the Proton acceptor in catalysis. The Zn(2+) site is built by Cys-124, Cys-127, Cys-152, and Cys-155. Residues 192-194, 218-220, and Ala-236 contribute to the NAD(+) site; these read GTS and NPQ.

Belongs to the sirtuin family. Class III subfamily. Requires Zn(2+) as cofactor.

It localises to the cytoplasm. It carries out the reaction N(6)-acetyl-L-lysyl-[protein] + NAD(+) + H2O = 2''-O-acetyl-ADP-D-ribose + nicotinamide + L-lysyl-[protein]. The enzyme catalyses N(6)-succinyl-L-lysyl-[protein] + NAD(+) + H2O = 2''-O-succinyl-ADP-D-ribose + nicotinamide + L-lysyl-[protein]. Functionally, NAD-dependent lysine deacetylase and desuccinylase that specifically removes acetyl and succinyl groups on target proteins. Modulates the activities of several proteins which are inactive in their acylated form. The sequence is that of NAD-dependent protein deacylase 1 from Pseudomonas aeruginosa (strain ATCC 15692 / DSM 22644 / CIP 104116 / JCM 14847 / LMG 12228 / 1C / PRS 101 / PAO1).